Here is a 152-residue protein sequence, read N- to C-terminus: MKLILTAEVDHLGEPGDTVEVKDGYGRNYLLPRGLAIVASRGAQRQADDIRRARELKTVKGLEHANEIKTALEALDTVELAVNASADTGKLFGSVTATDVVAAIKKAGGPNLDKRTVALPKAHIKSLGTHSVSVRLHPGVEASVSLNVVAES.

This sequence belongs to the bacterial ribosomal protein bL9 family.

In terms of biological role, binds to the 23S rRNA. This Mycobacterium sp. (strain JLS) protein is Large ribosomal subunit protein bL9.